The chain runs to 278 residues: Tryptophan synthase alpha chain (278 aa).

Catalysis depends on proton acceptor residues E50 and D61.

Belongs to the TrpA family. Tetramer of two alpha and two beta chains.

The enzyme catalyses (1S,2R)-1-C-(indol-3-yl)glycerol 3-phosphate + L-serine = D-glyceraldehyde 3-phosphate + L-tryptophan + H2O. The protein operates within amino-acid biosynthesis; L-tryptophan biosynthesis; L-tryptophan from chorismate: step 5/5. Its function is as follows. The alpha subunit is responsible for the aldol cleavage of indoleglycerol phosphate to indole and glyceraldehyde 3-phosphate. The polypeptide is Tryptophan synthase alpha chain (Afipia carboxidovorans (strain ATCC 49405 / DSM 1227 / KCTC 32145 / OM5) (Oligotropha carboxidovorans)).